We begin with the raw amino-acid sequence, 540 residues long: MATQSSAVIDSNDATRISRSDFPADFIMGTGSSAYQIEGGARDGGRGPSIWDTFTHRRPDMIRGGTNGDVAVDSYHLYKEDVNILKNLGLDAYRFSISWSRVLPGGRLSGGVNKEGINYYNNLIDGLLANGIKPFVTLFHWDVPQALEDEYGGFLSPRIVDDFCEYAELCFWEFGDRVKHWMTLNEPWTFSVHGYATGLYAPGRGRTSPEHVNHPTVQHRCSTVAPQCICSTGNPGTEPYWVTHHLLLAHAAAVELYKNKFQRGQEGQIGISHATQWMEPWDENSASDVEAAARALDFMLGWFMEPITSGDYPKSMKKFVGSRLPKFSPEQSKMLKGSYDFVGLNYYTASYVTNASTNSSGSNNFSYNTDIHVTYETDRNGVPIGPQSGSDWLLIYPEGIRKILVYTKKTYNVPLIYVTENGVDDVKNTNLTLSEARKDSMRLKYLQDHIFNVRQAMNDGVNVKGYFAWSLLDNFEWGEGYGVRFGIIHIDYNDNFARYPKDSAVWLMNSFHKNISKLPAVKRSIREDDEEQVSSKRLRK.

Residues Gln-36, His-140, and 185–186 (NE) each bind a beta-D-glucoside. The active-site Proton donor is Glu-186. A disulfide bond links Cys-221 and Cys-230. A beta-D-glucoside-binding positions include Tyr-347, Glu-420, Trp-469, 476–477 (EW), and Phe-485. Glu-420 functions as the Nucleophile in the catalytic mechanism.

It belongs to the glycosyl hydrolase 1 family.

It catalyses the reaction raucaffricine + H2O = vomilenine + D-glucose. The catalysed reaction is vomilenine + UDP-alpha-D-glucose = raucaffricine + UDP + H(+). Its function is as follows. Glucosidase specifically involved in alkaloid biosynthesis leading to the accumulation of several alkaloids, including ajmaline, an important plant-derived pharmaceutical used in the treatment of heart disorders. The polypeptide is Raucaffricine-O-beta-D-glucosidase (Rauvolfia serpentina (Serpentine wood)).